The sequence spans 260 residues: MIEVKGVWFWYEEGKPVLKNISLSFDEGILAVVGPNGSGKTTLVKMFNGLIKPKKGDVLVDGINTKEASTAQLSRIVGYVFQNPDAMFFEETVFDEVAFGPRNLGLSEEEVKERVKWALEAVGLKGFEDKNPFKLSGGEKQRLAIACILAMNPKYLVLDEPTTGLDERGVGALKNIIEELRKEGKSFVIVTHDMDLVLEVADKVLLLSNGEVQFYGDVFEFFELDLKRYKLEEPELVKICRGIGLKPVRSVEELLRGIGL.

Residues 2-234 (IEVKGVWFWY…DLKRYKLEEP (233 aa)) enclose the ABC transporter domain. 34–41 (GPNGSGKT) contacts ATP.

The protein belongs to the ABC transporter superfamily.

The protein localises to the cell membrane. Functionally, probably part of an ABC transporter complex. Responsible for energy coupling to the transport system. This chain is Putative ABC transporter ATP-binding protein PF0068, found in Pyrococcus furiosus (strain ATCC 43587 / DSM 3638 / JCM 8422 / Vc1).